Consider the following 1026-residue polypeptide: Multidrug resistance protein MdtC (1026 aa).

Helical transmembrane passes span 15–35, 333–353, 360–380, 387–407, 431–451, 463–483, 528–548, 853–873, 897–917, 953–973, and 984–1004; these read ILIAAAITLCGILGFRLLPVA, EVEETLAISVALVILVVFLFL, LIPAVAVPVSLIGTFAAMYLC, LSLMALTIATGFVVDDAIVVL, VGFTVISMSLSLVAVFLPLLL, FAVTLSVAIGISLVVSLTLTP, LVGVVFLGTVALNIWLYIAIP, LILIVAAIATVYIVLGILYES, LFNAPFSLIALIGIMLLIGIV, PIMMTTLAALFGALPLVLSDG, and ITIVGGLVMSQLLTLYTTPVV.

It belongs to the resistance-nodulation-cell division (RND) (TC 2.A.6) family. MdtC subfamily. Part of a tripartite efflux system composed of MdtA, MdtB and MdtC. MdtC forms a heteromultimer with MdtB.

Its subcellular location is the cell inner membrane. The sequence is that of Multidrug resistance protein MdtC from Salmonella paratyphi B (strain ATCC BAA-1250 / SPB7).